Here is a 125-residue protein sequence, read N- to C-terminus: Small ribosomal subunit protein uS12 (125 aa).

The segment at 1 to 31 is disordered; sequence MPTINQLVRQGREVETTKSKSPAMQNSPQRR. A compositionally biased stretch (polar residues) spans 19 to 29; sequence SKSPAMQNSPQ. 3-methylthioaspartic acid is present on D89.

This sequence belongs to the universal ribosomal protein uS12 family. In terms of assembly, part of the 30S ribosomal subunit. Contacts proteins S8 and S17. May interact with IF1 in the 30S initiation complex.

With S4 and S5 plays an important role in translational accuracy. Functionally, interacts with and stabilizes bases of the 16S rRNA that are involved in tRNA selection in the A site and with the mRNA backbone. Located at the interface of the 30S and 50S subunits, it traverses the body of the 30S subunit contacting proteins on the other side and probably holding the rRNA structure together. The combined cluster of proteins S8, S12 and S17 appears to hold together the shoulder and platform of the 30S subunit. The sequence is that of Small ribosomal subunit protein uS12 from Paracidovorax citrulli (strain AAC00-1) (Acidovorax citrulli).